A 241-amino-acid polypeptide reads, in one-letter code: HTH-type quorum-sensing regulator RhlR (241 aa).

The HTH luxR-type domain occupies 174–239 (LMSNPVCLSH…LAAAYAAALG (66 aa)). Positions 198-217 (SGEIAIILSISESTVNFHHK) form a DNA-binding region, H-T-H motif.

Belongs to the autoinducer-regulated transcriptional regulatory protein family. As to quaternary structure, homodimer in the absence of any acyl-L-homoserine lactone. The presence of the autoinducer C4-HSL has no significant effect on dimerization whereas N-(3-oxododecanoyl)-L-homoserine lactone (3O-C12-HSL), the LasR inducer, is able to dissociate the RhlR homodimers into monomers.

Its subcellular location is the cytoplasm. With respect to regulation, activated by interaction with the autoinducer signal molecule N-butanoyl-L-homoserine lactone (C4-HSL or BHL), the product of the RhlI synthase. Is also activated by binding to rosmarinic acid (RA), a homoserine lactone mimic produced by plants, which induces a broad quorum sensing response, including the induction of all major quorum sensing controlled virulence factors. Rosmarinic acid secretion may be a plant defense mechanism to stimulate a premature quorum sensing response. Quorum-sensing regulator that controls the expression of multiple virulence factors in response to extracellular signaling molecules called autoinducers. Involved, among others, in the transcriptional regulation of genes that are responsible for rhamnolipid surfactant biosynthesis. Acts by binding to a specific sequence in the rhlAB regulatory region, both in the presence and in the absence of its autoinducer. In the former case it activates transcription of the promoter, whereas in the latter it acts as a transcriptional repressor. Also regulates the expression of the rmlBDAC operon, encoding dTDP-L-rhamnose biosynthetic enzymes, by binding to the rml box in the promoter region. In addition, is involved in the regulation of the production of elastase (lasB) and pyocyanine. This Pseudomonas aeruginosa (strain ATCC 15692 / DSM 22644 / CIP 104116 / JCM 14847 / LMG 12228 / 1C / PRS 101 / PAO1) protein is HTH-type quorum-sensing regulator RhlR.